The chain runs to 126 residues: Large ribosomal subunit protein bL20c (126 aa).

It belongs to the bacterial ribosomal protein bL20 family.

It is found in the plastid. Its subcellular location is the chloroplast. Functionally, binds directly to 23S ribosomal RNA and is necessary for the in vitro assembly process of the 50S ribosomal subunit. It is not involved in the protein synthesizing functions of that subunit. The sequence is that of Large ribosomal subunit protein bL20c from Pelargonium hortorum (Common geranium).